The following is a 72-amino-acid chain: Large ribosomal subunit protein uL29 (72 aa).

The protein belongs to the universal ribosomal protein uL29 family.

The chain is Large ribosomal subunit protein uL29 from Prochlorococcus marinus (strain MIT 9215).